The chain runs to 173 residues: MIYPQIMHKPALPWVFRRPTQEDGLSIHELIAQCAPLDQNSAYCNFLQSSHFQTTCLMAEQQELLVGFVSAYRKPEQQNELFIWQVAVHPSARGKGLAYQMLKHLLAREDLADITVLETTITRSNQASWRLFQKLDREQGEQGSVSTFLDETCHFEGEHDTEYLYRIPLQSSN.

Positions 14-170 constitute an N-acetyltransferase domain; it reads WVFRRPTQED…TEYLYRIPLQ (157 aa).

Belongs to the acetyltransferase family. EctA subfamily.

It carries out the reaction L-2,4-diaminobutanoate + acetyl-CoA = (2S)-4-acetamido-2-aminobutanoate + CoA + H(+). It functions in the pathway amine and polyamine biosynthesis; ectoine biosynthesis; L-ectoine from L-aspartate 4-semialdehyde: step 2/3. Functionally, catalyzes the acetylation of L-2,4-diaminobutyrate (DABA) to gamma-N-acetyl-alpha,gamma-diaminobutyric acid (ADABA) with acetyl coenzyme A. The polypeptide is L-2,4-diaminobutyric acid acetyltransferase (ectA) (Vibrio cholerae serotype O1 (strain ATCC 39315 / El Tor Inaba N16961)).